Reading from the N-terminus, the 551-residue chain is ATPase expression protein 2, mitochondrial (551 aa).

The interval 530 to 551 (AQKAQKRFDDEEEDSMLLGRLW) is disordered.

The protein belongs to the AEP2 family. In terms of assembly, binds to the 5'UTR of the OLI1 mRNA.

It is found in the mitochondrion. Required for translation of the mitochondrial OLI1 transcript coding for the mitochondrial ATP synthase subunit 9. The protein is ATPase expression protein 2, mitochondrial (AEP2) of Lachancea thermotolerans (strain ATCC 56472 / CBS 6340 / NRRL Y-8284) (Yeast).